We begin with the raw amino-acid sequence, 429 residues long: UDP-N-acetylglucosamine 1-carboxyvinyltransferase (429 aa).

Residue 22-23 coordinates phosphoenolpyruvate; the sequence is KN. R102 provides a ligand contact to UDP-N-acetyl-alpha-D-glucosamine. The Proton donor role is filled by C126. C126 is modified (2-(S-cysteinyl)pyruvic acid O-phosphothioketal). Residues 131-135, D316, and I338 each bind UDP-N-acetyl-alpha-D-glucosamine; that span reads RPVDL.

Belongs to the EPSP synthase family. MurA subfamily.

The protein localises to the cytoplasm. It carries out the reaction phosphoenolpyruvate + UDP-N-acetyl-alpha-D-glucosamine = UDP-N-acetyl-3-O-(1-carboxyvinyl)-alpha-D-glucosamine + phosphate. It participates in cell wall biogenesis; peptidoglycan biosynthesis. Cell wall formation. Adds enolpyruvyl to UDP-N-acetylglucosamine. The chain is UDP-N-acetylglucosamine 1-carboxyvinyltransferase from Afipia carboxidovorans (strain ATCC 49405 / DSM 1227 / KCTC 32145 / OM5) (Oligotropha carboxidovorans).